The primary structure comprises 218 residues: Elongation factor Ts (218 aa).

Residues threonine 82 to valine 85 are involved in Mg(2+) ion dislocation from EF-Tu.

The protein belongs to the EF-Ts family.

It is found in the cytoplasm. In terms of biological role, associates with the EF-Tu.GDP complex and induces the exchange of GDP to GTP. It remains bound to the aminoacyl-tRNA.EF-Tu.GTP complex up to the GTP hydrolysis stage on the ribosome. This is Elongation factor Ts from Prochlorococcus marinus (strain MIT 9215).